Here is a 295-residue protein sequence, read N- to C-terminus: MTDYLVRAIAKSGSVRALVCVTTATVGEICKRHDTLPTATAALGRGITAGALMGSLVKTGQRVALRFEGNGPLKKIVIEADANGSVRGYVGDPKVHLLRPDGALDVNNALGRAGFLTVAKDLGLKEPYRGTVQLYTSGIAEDLALYLVESEQIPSAVGIAEFIEQDGTVAAVGGFLIQAVPPVDPLVVEELMTRIEQLPPLSELLHEGGNPEQILEQLLAGIPYDILEKRNIAFACSCSRERIERVLLSMGKKELSSMKKDQHGSEVTCEFCGERYLFDEADLDRIIAEIAKQES.

Intrachain disulfides connect cysteine 236–cysteine 238 and cysteine 269–cysteine 272.

This sequence belongs to the HSP33 family. Post-translationally, under oxidizing conditions two disulfide bonds are formed involving the reactive cysteines. Under reducing conditions zinc is bound to the reactive cysteines and the protein is inactive.

The protein resides in the cytoplasm. Redox regulated molecular chaperone. Protects both thermally unfolding and oxidatively damaged proteins from irreversible aggregation. Plays an important role in the bacterial defense system toward oxidative stress. This chain is 33 kDa chaperonin, found in Geobacter sp. (strain M21).